The following is a 1036-amino-acid chain: Isoleucine--tRNA ligase (1036 aa).

Residues 48–58 carry the 'HIGH' region motif; it reads PTANGKPHVGH. The 'KMSKS' region motif lies at 590 to 594; that stretch reads KMSKS. K593 serves as a coordination point for ATP.

This sequence belongs to the class-I aminoacyl-tRNA synthetase family. IleS type 2 subfamily. As to quaternary structure, monomer. Zn(2+) is required as a cofactor.

The protein localises to the cytoplasm. The enzyme catalyses tRNA(Ile) + L-isoleucine + ATP = L-isoleucyl-tRNA(Ile) + AMP + diphosphate. In terms of biological role, catalyzes the attachment of isoleucine to tRNA(Ile). As IleRS can inadvertently accommodate and process structurally similar amino acids such as valine, to avoid such errors it has two additional distinct tRNA(Ile)-dependent editing activities. One activity is designated as 'pretransfer' editing and involves the hydrolysis of activated Val-AMP. The other activity is designated 'posttransfer' editing and involves deacylation of mischarged Val-tRNA(Ile). The protein is Isoleucine--tRNA ligase of Clostridium tetani (strain Massachusetts / E88).